The primary structure comprises 598 residues: Elongation factor 4 (598 aa).

One can recognise a tr-type G domain in the interval 5–187; sequence ANIRNFSIIA…ALVEFIPAPT (183 aa). GTP-binding positions include 17 to 22 and 134 to 137; these read DHGKST and NKID.

It belongs to the TRAFAC class translation factor GTPase superfamily. Classic translation factor GTPase family. LepA subfamily.

The protein localises to the cell inner membrane. The catalysed reaction is GTP + H2O = GDP + phosphate + H(+). Its function is as follows. Required for accurate and efficient protein synthesis under certain stress conditions. May act as a fidelity factor of the translation reaction, by catalyzing a one-codon backward translocation of tRNAs on improperly translocated ribosomes. Back-translocation proceeds from a post-translocation (POST) complex to a pre-translocation (PRE) complex, thus giving elongation factor G a second chance to translocate the tRNAs correctly. Binds to ribosomes in a GTP-dependent manner. The sequence is that of Elongation factor 4 from Psychrobacter cryohalolentis (strain ATCC BAA-1226 / DSM 17306 / VKM B-2378 / K5).